A 494-amino-acid chain; its full sequence is Anthranilate synthase component 1 (494 aa).

Residues serine 50 and 276-278 (PYM) each bind L-tryptophan. 311-312 (GT) lines the chorismate pocket. Residue glutamate 338 participates in Mg(2+) binding. Chorismate-binding positions include tyrosine 426, arginine 446, 460–462 (GAG), and glycine 462. Glutamate 475 contributes to the Mg(2+) binding site.

Belongs to the anthranilate synthase component I family. As to quaternary structure, heterotetramer consisting of two non-identical subunits: a beta subunit (TrpG) and a large alpha subunit (TrpE). Requires Mg(2+) as cofactor.

It catalyses the reaction chorismate + L-glutamine = anthranilate + pyruvate + L-glutamate + H(+). Its pathway is amino-acid biosynthesis; L-tryptophan biosynthesis; L-tryptophan from chorismate: step 1/5. With respect to regulation, feedback inhibited by tryptophan. Functionally, part of a heterotetrameric complex that catalyzes the two-step biosynthesis of anthranilate, an intermediate in the biosynthesis of L-tryptophan. In the first step, the glutamine-binding beta subunit (TrpG) of anthranilate synthase (AS) provides the glutamine amidotransferase activity which generates ammonia as a substrate that, along with chorismate, is used in the second step, catalyzed by the large alpha subunit of AS (TrpE) to produce anthranilate. In the absence of TrpG, TrpE can synthesize anthranilate directly from chorismate and high concentrations of ammonia. The protein is Anthranilate synthase component 1 (trpE) of Acetivibrio thermocellus (Hungateiclostridium thermocellum).